A 370-amino-acid chain; its full sequence is S-adenosylmethionine:tRNA ribosyltransferase-isomerase (370 aa).

Belongs to the QueA family. Monomer.

It is found in the cytoplasm. The enzyme catalyses 7-aminomethyl-7-carbaguanosine(34) in tRNA + S-adenosyl-L-methionine = epoxyqueuosine(34) in tRNA + adenine + L-methionine + 2 H(+). The protein operates within tRNA modification; tRNA-queuosine biosynthesis. Functionally, transfers and isomerizes the ribose moiety from AdoMet to the 7-aminomethyl group of 7-deazaguanine (preQ1-tRNA) to give epoxyqueuosine (oQ-tRNA). The sequence is that of S-adenosylmethionine:tRNA ribosyltransferase-isomerase from Synechococcus sp. (strain WH7803).